We begin with the raw amino-acid sequence, 361 residues long: Molybdenum import ATP-binding protein ModC 1 (361 aa).

One can recognise an ABC transporter domain in the interval 1–237 (MPADGIRARF…LDLPTAFHED (237 aa)). 35–42 (GHSGSGKT) contributes to the ATP binding site. Positions 296–361 (DSSITNVLPA…AQIKAVALLG (66 aa)) constitute a Mop domain.

This sequence belongs to the ABC transporter superfamily. Molybdate importer (TC 3.A.1.8) family. As to quaternary structure, the complex is composed of two ATP-binding proteins (ModC), two transmembrane proteins (ModB) and a solute-binding protein (ModA).

The protein resides in the cell inner membrane. The catalysed reaction is molybdate(out) + ATP + H2O = molybdate(in) + ADP + phosphate + H(+). Part of the ABC transporter complex ModABC involved in molybdenum import. Responsible for energy coupling to the transport system. In Azotobacter vinelandii, this protein is Molybdenum import ATP-binding protein ModC 1.